Here is a 316-residue protein sequence, read N- to C-terminus: Methionyl-tRNA formyltransferase (316 aa).

111 to 114 (SLLP) provides a ligand contact to (6S)-5,6,7,8-tetrahydrofolate.

The protein belongs to the Fmt family.

The catalysed reaction is L-methionyl-tRNA(fMet) + (6R)-10-formyltetrahydrofolate = N-formyl-L-methionyl-tRNA(fMet) + (6S)-5,6,7,8-tetrahydrofolate + H(+). Attaches a formyl group to the free amino group of methionyl-tRNA(fMet). The formyl group appears to play a dual role in the initiator identity of N-formylmethionyl-tRNA by promoting its recognition by IF2 and preventing the misappropriation of this tRNA by the elongation apparatus. In Limosilactobacillus fermentum (strain NBRC 3956 / LMG 18251) (Lactobacillus fermentum), this protein is Methionyl-tRNA formyltransferase.